A 342-amino-acid polypeptide reads, in one-letter code: Sorting nexin-15 (342 aa).

Positions 1 to 130 constitute a PX domain; it reads MSRQAKDDFL…EFFRGGEVTR (130 aa). Residues arginine 51, serine 53, arginine 87, and arginine 96 each coordinate a 1,2-diacyl-sn-glycero-3-phospho-(1D-myo-inositol-3-phosphate). An Omega-N-methylarginine modification is found at arginine 105. Serine 201 and serine 227 each carry phosphoserine. The segment at 245 to 267 is disordered; that stretch reads DQEPWEPGGQEEEEDGEGGPTPA. The MIT domain occupies 265–342; it reads TPAYLSQATE…LRLHLSQLPP (78 aa).

Belongs to the sorting nexin family. As to quaternary structure, homodimer. Interacts with SNX1, SNX2 and SNX4. In terms of tissue distribution, widely expressed.

The protein localises to the cytoplasm. The protein resides in the membrane. Its subcellular location is the cytoplasmic vesicle membrane. In terms of biological role, may be involved in several stages of intracellular trafficking. Overexpression of SNX15 disrupts the normal trafficking of proteins from the plasma membrane to recycling endosomes or the TGN. This chain is Sorting nexin-15 (SNX15), found in Homo sapiens (Human).